A 677-amino-acid chain; its full sequence is Methionine--tRNA ligase (677 aa).

Residues Pro15 to His25 carry the 'HIGH' region motif. Zn(2+) contacts are provided by Cys146, Cys149, Cys159, and Cys162. The short motif at Lys333–Ser337 is the 'KMSKS' region element. Lys336 lines the ATP pocket. One can recognise a tRNA-binding domain in the interval Asp575–Lys677.

It belongs to the class-I aminoacyl-tRNA synthetase family. MetG type 1 subfamily. In terms of assembly, homodimer. The cofactor is Zn(2+).

Its subcellular location is the cytoplasm. It catalyses the reaction tRNA(Met) + L-methionine + ATP = L-methionyl-tRNA(Met) + AMP + diphosphate. Functionally, is required not only for elongation of protein synthesis but also for the initiation of all mRNA translation through initiator tRNA(fMet) aminoacylation. The chain is Methionine--tRNA ligase (metG) from Escherichia coli (strain K12).